The primary structure comprises 361 residues: MSSRKIKEEMLEIIAPELYAPRHRRSVKAETKSRVKKEEIKSKRKWKRPQIDDLLTEDVEVVGATAPRRPYQWRGRKVKRVLRPGTVITFTPGVRSRERASKRSSDEIFADEDILEQYERGEGEFRYGKRSKAEAAVVLDTSNPTPSLHPVTPQMPIVHTSAAKRSAVPTVEVLAPKKRRFTESSDQLAVDMVTETSTVPPGTAVLLPARAVKQARRRFPVAVESKKPEHMVVEEVKVRDVKPVAPGIGVQTIDFKVPVDAPKPPVSITEQMDISSTPAKKVAYGPANKIIPVAWQHPSQMGFPKYVRPKRRRRVARRSKSTGRFVAAPRKRTPRRKIVLPAVRYHPSLDTVPRSQVAIWR.

A compositionally biased stretch (basic residues) spans arginine 311 to serine 321. Residues arginine 311–lysine 331 are disordered.

It belongs to the adenoviridae core-capsid bridging protein family. Monomer. Homodimer. Exists in equilibrium between monomers and dimers in solution. Interacts with the histone-like nucleoprotein; this interactions bridge the virus core to the capsid. Interacts with core protein X; this interactions bridge the virus core to the capsid. Interacts with the endosome lysis protein VI; this interactions bridge the virus core to the capsid. Interacts with the peripentonal hexons. Interacts with host NPM1; this interaction might play a role in virus assembly.

Its subcellular location is the virion. The protein resides in the host nucleus. It is found in the host nucleolus. Functionally, associates loosely with the viral DNA to form an outer shell around the nucleoprotein-DNA complex and links it with the capsid by binding the endosome lysis protein. Dissociates from the viral genome during entry. Might be involved in nuclear capsid assembly of the viral particles through its association with NPM1/nucleophosmin. This chain is Core-capsid bridging protein, found in Bovine adenovirus 2 (BAdV-2).